A 203-amino-acid polypeptide reads, in one-letter code: Putative B3 domain-containing protein At1g50220 (203 aa).

Positions 99-195 (DIVGNVALPK…KFIVLNFQHK (97 aa)) form a DNA-binding region, TF-B3.

Its subcellular location is the nucleus. This is Putative B3 domain-containing protein At1g50220 from Arabidopsis thaliana (Mouse-ear cress).